The following is a 146-amino-acid chain: Transcriptional regulator MraZ (146 aa).

SpoVT-AbrB domains are found at residues 5 to 51 (NHPT…PLQE) and 80 to 123 (GQMV…NHEA).

This sequence belongs to the MraZ family. As to quaternary structure, forms oligomers.

The protein resides in the cytoplasm. It is found in the nucleoid. This Acidobacterium capsulatum (strain ATCC 51196 / DSM 11244 / BCRC 80197 / JCM 7670 / NBRC 15755 / NCIMB 13165 / 161) protein is Transcriptional regulator MraZ.